An 86-amino-acid chain; its full sequence is Putative membrane protein insertion efficiency factor (86 aa).

It belongs to the UPF0161 family.

The protein resides in the cell inner membrane. Functionally, could be involved in insertion of integral membrane proteins into the membrane. The sequence is that of Putative membrane protein insertion efficiency factor from Pasteurella multocida (strain Pm70).